A 658-amino-acid chain; its full sequence is Protein teflon (658 aa).

The C2H2-type 1 zinc finger occupies 33 to 56 (LYCHFCRDLFTQLPEFLRHLQSNH). The segment at 80-131 (DKAHEDAQSAGHNSSSGDSRSLMNSEDSRAIDGSEENSDNSPVKPEQIGKQN) is disordered. Residues 89-104 (AGHNSSSGDSRSLMNS) are compositionally biased toward polar residues. 2 consecutive C2H2-type zinc fingers follow at residues 608–630 (YFCK…LISH) and 634–657 (FQCT…RNAH).

Belongs to the Teflon family.

Its subcellular location is the nucleus. It is found in the chromosome. In terms of biological role, specifically required in males for proper segregation of autosomal bivalents at meiosis I. Expression is required in the male germ line prior to spermatocyte stage S4. May have a role as a bridging molecule maintaining adhesion to hold autosome bivalents together via heterochromatic connections. The protein is Protein teflon of Drosophila simulans (Fruit fly).